Here is a 70-residue protein sequence, read N- to C-terminus: MKKDIHPKYEEITASCSCGNVIKIRSTVGHDLNLDVCSKCHPFFTGKQRDVATGGRVDRFNKRFNIPGSK.

K8 is subject to N6-acetyllysine. Residues C16, C18, C37, and C40 each coordinate Zn(2+).

The protein belongs to the bacterial ribosomal protein bL31 family. Type A subfamily. In terms of assembly, part of the 50S ribosomal subunit. Requires Zn(2+) as cofactor.

In terms of biological role, binds the 23S rRNA. The polypeptide is Large ribosomal subunit protein bL31 (Shigella flexneri).